The sequence spans 687 residues: Homoaconitase, mitochondrial (687 aa).

A mitochondrion-targeting transit peptide spans 1–18; it reads MFAFRNRAVTQTLLVRRY. Cys340, Cys400, and Cys403 together coordinate [4Fe-4S] cluster. The segment covering 481–490 has biased composition (acidic residues); that stretch reads EAEADAEAAE. Positions 481 to 500 are disordered; the sequence is EAEADAEAAESDPAPSGGVL.

This sequence belongs to the aconitase/IPM isomerase family. [4Fe-4S] cluster serves as cofactor.

Its subcellular location is the mitochondrion. It catalyses the reaction (2R,3S)-homoisocitrate = cis-homoaconitate + H2O. The protein operates within amino-acid biosynthesis; L-lysine biosynthesis via AAA pathway; L-alpha-aminoadipate from 2-oxoglutarate: step 3/5. Functionally, catalyzes the reversible hydration of cis-homoaconitate to (2R,3S)-homoisocitrate, a step in the alpha-aminoadipate pathway for lysine biosynthesis. This is Homoaconitase, mitochondrial (LYS4) from Yarrowia lipolytica (strain CLIB 122 / E 150) (Yeast).